The following is a 697-amino-acid chain: tRNA 5-methylaminomethyl-2-thiouridine biosynthesis bifunctional protein MnmC (697 aa).

Residues 1–269 are tRNA (mnm(5)s(2)U34)-methyltransferase; it reads MNKTPLLSVS…LRQQLQQQFA (269 aa). Residues 287 to 697 are FAD-dependent cmnm(5)s(2)U34 oxidoreductase; the sequence is IGGGIASASL…RKLLKGKALM (411 aa).

In the N-terminal section; belongs to the methyltransferase superfamily. tRNA (mnm(5)s(2)U34)-methyltransferase family. It in the C-terminal section; belongs to the DAO family. FAD is required as a cofactor.

It is found in the cytoplasm. It catalyses the reaction 5-aminomethyl-2-thiouridine(34) in tRNA + S-adenosyl-L-methionine = 5-methylaminomethyl-2-thiouridine(34) in tRNA + S-adenosyl-L-homocysteine + H(+). Catalyzes the last two steps in the biosynthesis of 5-methylaminomethyl-2-thiouridine (mnm(5)s(2)U) at the wobble position (U34) in tRNA. Catalyzes the FAD-dependent demodification of cmnm(5)s(2)U34 to nm(5)s(2)U34, followed by the transfer of a methyl group from S-adenosyl-L-methionine to nm(5)s(2)U34, to form mnm(5)s(2)U34. This is tRNA 5-methylaminomethyl-2-thiouridine biosynthesis bifunctional protein MnmC from Shewanella frigidimarina (strain NCIMB 400).